Reading from the N-terminus, the 89-residue chain is Small ribosomal subunit protein uS15 (89 aa).

The protein belongs to the universal ribosomal protein uS15 family. In terms of assembly, part of the 30S ribosomal subunit. Forms a bridge to the 50S subunit in the 70S ribosome, contacting the 23S rRNA.

Its function is as follows. One of the primary rRNA binding proteins, it binds directly to 16S rRNA where it helps nucleate assembly of the platform of the 30S subunit by binding and bridging several RNA helices of the 16S rRNA. Functionally, forms an intersubunit bridge (bridge B4) with the 23S rRNA of the 50S subunit in the ribosome. The sequence is that of Small ribosomal subunit protein uS15 from Shewanella piezotolerans (strain WP3 / JCM 13877).